A 222-amino-acid polypeptide reads, in one-letter code: Sigma non-opioid intracellular receptor 1 (222 aa).

Topologically, residues methionine 1–threonine 6 are lumenal. The chain crosses the membrane as a helical span at residues isoleucine 7–alanine 29. The Cytoplasmic segment spans residues asparagine 30–leucine 222. The segment at serine 97–leucine 104 is important for ligand-binding. The tract at residues phenylalanine 175–leucine 222 is C-terminal hydrophobic region.

The protein belongs to the ERG2 family. Homotrimer.

The protein resides in the nucleus inner membrane. It is found in the nucleus outer membrane. The protein localises to the nucleus envelope. It localises to the cytoplasmic vesicle. Its subcellular location is the endoplasmic reticulum membrane. The protein resides in the membrane. Its function is as follows. May function in lipid transport from the endoplasmic reticulum and be involved in a wide array of cellular functions probably through regulation of the biogenesis of lipid microdomains at the plasma membrane. May regulate calcium efflux at the endoplasmic reticulum. The sequence is that of Sigma non-opioid intracellular receptor 1 (sigmar1) from Danio rerio (Zebrafish).